We begin with the raw amino-acid sequence, 362 residues long: Phosphoserine aminotransferase (362 aa).

Residues Ser-9 and Arg-42 each coordinate L-glutamate. Residues 76–77 (GR), Trp-102, Thr-153, Asp-174, and Gln-197 contribute to the pyridoxal 5'-phosphate site. Lys-198 bears the N6-(pyridoxal phosphate)lysine mark. Position 239 to 240 (239 to 240 (NT)) interacts with pyridoxal 5'-phosphate.

It belongs to the class-V pyridoxal-phosphate-dependent aminotransferase family. SerC subfamily. In terms of assembly, homodimer. It depends on pyridoxal 5'-phosphate as a cofactor.

Its subcellular location is the cytoplasm. The catalysed reaction is O-phospho-L-serine + 2-oxoglutarate = 3-phosphooxypyruvate + L-glutamate. It carries out the reaction 4-(phosphooxy)-L-threonine + 2-oxoglutarate = (R)-3-hydroxy-2-oxo-4-phosphooxybutanoate + L-glutamate. It participates in amino-acid biosynthesis; L-serine biosynthesis; L-serine from 3-phospho-D-glycerate: step 2/3. The protein operates within cofactor biosynthesis; pyridoxine 5'-phosphate biosynthesis; pyridoxine 5'-phosphate from D-erythrose 4-phosphate: step 3/5. Its function is as follows. Catalyzes the reversible conversion of 3-phosphohydroxypyruvate to phosphoserine and of 3-hydroxy-2-oxo-4-phosphonooxybutanoate to phosphohydroxythreonine. In Salmonella newport (strain SL254), this protein is Phosphoserine aminotransferase.